Here is a 165-residue protein sequence, read N- to C-terminus: Protein NKG7 (165 aa).

Transmembrane regions (helical) follow at residues 9 to 29, 61 to 81, 92 to 112, and 133 to 153; these read LLGG…DFWF, FSIM…LSCF, LVST…MAVY, and FYLG…SLGA.

Belongs to the PMP-22/EMP/MP20 family. In terms of tissue distribution, expressed in activated T-cells, in kidney, liver, lung and pancreas. Not expressed in brain, heart, or skeletal muscle. Expressed at high levels in TCR gamma delta-expressing CTL clones, and in some TCR alpha beta-expressing CTL clones (both CD4+ and CD8+), but is not expressed in other TCR alpha beta-expressing CTL clones and in cell lines representing B-cells, monocytes, and myeloid cells.

It localises to the cell membrane. The protein localises to the cytolytic granule membrane. Functionally, regulates cytotoxic granule exocytosis in effector lymphocytes, thus acting as a critical mediator of inflammation in a broad range of infectious and non-infectious diseases. Essential for cytotoxic degranulation of natural killer (NK) cells and CD8(+) T-cells and for the activation of CD4(+) T-cells following infection. Plays a critical role in CD8(+) T-cell and NK cell-mediated cytolysis of target cells and contributes to the cytolytic activity via the perforin/granzyme pathway by enhancing exocytosis of LAMP1-carrying lytic granules. Contributes to NK cell-mediated control of cancer metastasis. The polypeptide is Protein NKG7 (NKG7) (Homo sapiens (Human)).